Reading from the N-terminus, the 362-residue chain is Heme A synthase (362 aa).

The next 5 helical transmembrane spans lie at 12–32, 102–122, 128–148, 159–179, and 198–218; these read AVKI…LVGG, VIGL…HLGG, LWLI…MVAS, ERLA…VWTL, and AAAL…VAGL. Heme is bound at residue histidine 262. 3 helical membrane passes run 264–286, 291–311, and 314–334; these read MLAY…ARAG, GAVW…FTLL, and VPIG…MLGV. Histidine 322 is a binding site for heme.

The protein belongs to the COX15/CtaA family. Type 2 subfamily. As to quaternary structure, interacts with CtaB. It depends on heme b as a cofactor.

The protein localises to the cell membrane. The enzyme catalyses Fe(II)-heme o + 2 A + H2O = Fe(II)-heme a + 2 AH2. The protein operates within porphyrin-containing compound metabolism; heme A biosynthesis; heme A from heme O: step 1/1. Catalyzes the conversion of heme O to heme A by two successive hydroxylations of the methyl group at C8. The first hydroxylation forms heme I, the second hydroxylation results in an unstable dihydroxymethyl group, which spontaneously dehydrates, resulting in the formyl group of heme A. This Rhodopseudomonas palustris (strain BisA53) protein is Heme A synthase.